We begin with the raw amino-acid sequence, 876 residues long: MTVTMKVMKKNNRKSWSLYIAMALLIPCLSYSKQLYATVYSGVPVWEEAAPVLFCASDANLTSTEQHNIWASQACVPTDPNPHEFPLGNVTDNFDIWKNYMVDQMHEDIISLWEQSLKPCEKMTFLCVQMNCVDLQTNKTGLLNETINEMRNCSFNVTTVLTDKKEQKQALFYVSDLSKVNDSNAVNGTTYMLTNCNSTIIKQACPKVSFEPIPIHYCAPTGYAIFKCNDTDFNGTGLCHNISVVTCTHGIKPTVSTQLILNGTLSREKIRIMGKNITESAKNIIVTLNTPINMTCIREGIAEVQDIYTGPMRWRSMTLKRSNNTSPRSRVAYCTYNKTVWENALQQTAIRYLNLVNQTENVTIIFSRTSGGDAEVSHLHFNCHGEFFYCNTSGMFNYTFINCTKSGCQEIKGSNETNKNGTIPCKLRQLVRSWMKGESRIYAPPIPGNLTCHSNITGMILQLDQPWNSTGENTLRPVGGDMKDIWRTKLYNYKVVQIKPFSVAPTKMSRPIINIHTPHREKRAVGLGMLFLGVLSAAGSTMGAAATALTVRTHSVLKGIVQQQDNLLRAIQAQQHLLRLSVWGIRQLRARLQALETLIQNQQRLNLWGCKGKLICYTSVKWNTSWSGRYNDDSIWDNLTWQQWDQHINNVSSIIYDEIQAAQDQQEKNVKALLELDEWASLWNWFDITKWLWYIKIAIIIVGALIGIRVIMIILNLVKNIRQGYQPLSLQIPVPHRQEAETPGRTGEEGGEGDRPKWTALPPGFLQQLYTDLRTIILWTYHLLSNLISGIRRLIDYLGLGLWILGQKTIEACRLCGAVMQYWLQELKNSATNLLDTIAVSVANWTDGIILGLQRIGQGFLHIPRRIRQGAERILV.

Residues 1–33 form the signal peptide; the sequence is MTVTMKVMKKNNRKSWSLYIAMALLIPCLSYSK. Over 34–697 the chain is Extracellular; that stretch reads QLYATVYSGV…ITKWLWYIKI (664 aa). Cysteines 55 and 75 form a disulfide. Asn60, Asn89, Asn138, Asn144, Asn152, Asn156, Asn181, Asn187, Asn197, Asn229, Asn234, Asn241, Asn262, Asn276, Asn293, Asn323, Asn337, Asn357, and Asn361 each carry an N-linked (GlcNAc...) asparagine; by host glycan. 5 disulfides stabilise this stretch: Cys120–Cys205, Cys127–Cys196, Cys132–Cys153, Cys218–Cys247, and Cys228–Cys239. A V1 region spans residues 132 to 152; that stretch reads CVDLQTNKTGLLNETINEMRN. The V2 stretch occupies residues 153-196; that stretch reads CSFNVTTVLTDKKEQKQALFYVSDLSKVNDSNAVNGTTYMLTNC. Residues 296 to 333 form a V3 region; sequence CIREGIAEVQDIYTGPMRWRSMTLKRSNNTSPRSRVAY. Cys296 and Cys334 are disulfide-bonded. The tract at residues 369–379 is CD4-binding loop; sequence TSGGDAEVSHL. 2 disulfides stabilise this stretch: Cys383-Cys452 and Cys390-Cys425. A V4 region spans residues 390–425; the sequence is CNTSGMFNYTFINCTKSGCQEIKGSNETNKNGTIPC. N-linked (GlcNAc...) asparagine; by host glycosylation is found at Asn391, Asn397, Asn402, Asn415, Asn420, Asn449, Asn455, and Asn468. V5 stretches follow at residues 468 to 478 and 470 to 478; these read NSTGENTLRPV and TGENTLRPV. The fusion peptide stretch occupies residues 524–544; sequence AVGLGMLFLGVLSAAGSTMGA. Residues 586–604 form an immunosuppression region; that stretch reads RQLRARLQALETLIQNQQR. A disulfide bridge connects residues Cys610 and Cys616. 3 N-linked (GlcNAc...) asparagine; by host glycosylation sites follow: Asn623, Asn638, and Asn650. The stretch at 646–680 forms a coiled coil; sequence QHINNVSSIIYDEIQAAQDQQEKNVKALLELDEWA. Residues 675–696 are MPER; binding to GalCer; that stretch reads ELDEWASLWNWFDITKWLWYIK. A helical membrane pass occupies residues 698–718; sequence AIIIVGALIGIRVIMIILNLV. Over 719-876 the chain is Cytoplasmic; it reads KNIRQGYQPL…IRQGAERILV (158 aa). Residues 725–728 carry the YXXL motif; contains endocytosis signal motif; it reads YQPL.

The protein belongs to the HIV-1 env protein family. As to quaternary structure, the mature envelope protein (Env) consists of a homotrimer of non-covalently associated gp120-gp41 heterodimers. The resulting complex protrudes from the virus surface as a spike. There seems to be as few as 10 spikes on the average virion. Interacts with host CD4, CCR5 and CXCR4. Gp120 also interacts with the C-type lectins CD209/DC-SIGN and CLEC4M/DC-SIGNR (collectively referred to as DC-SIGN(R)). Gp120 and gp41 interact with GalCer. Gp120 interacts with host ITGA4/ITGB7 complex; on CD4+ T-cells, this interaction results in rapid activation of integrin ITGAL/LFA-1, which facilitates efficient cell-to-cell spreading of HIV-1. Gp120 interacts with cell-associated heparan sulfate; this interaction increases virus infectivity on permissive cells and may be involved in infection of CD4- cells. In terms of assembly, the mature envelope protein (Env) consists of a homotrimer of non-covalently associated gp120-gp41 heterodimers. The resulting complex protrudes from the virus surface as a spike. There seems to be as few as 10 spikes on the average virion. Highly glycosylated by host. The high number of glycan on the protein is reffered to as 'glycan shield' because it contributes to hide protein sequence from adaptive immune system. Post-translationally, palmitoylation of the transmembrane protein and of Env polyprotein (prior to its proteolytic cleavage) is essential for their association with host cell membrane lipid rafts. Palmitoylation is therefore required for envelope trafficking to classical lipid rafts, but not for viral replication. In terms of processing, specific enzymatic cleavages in vivo yield mature proteins. Envelope glycoproteins are synthesized as an inactive precursor that is heavily N-glycosylated and processed likely by host cell furin in the Golgi to yield the mature SU and TM proteins. The cleavage site between SU and TM requires the minimal sequence [KR]-X-[KR]-R. About 2 of the 9 disulfide bonds of gp41 are reduced by P4HB/PDI, following binding to CD4 receptor.

The protein resides in the virion membrane. It is found in the host cell membrane. It localises to the host endosome membrane. Oligomerizes in the host endoplasmic reticulum into predominantly trimers. In a second time, gp160 transits in the host Golgi, where glycosylation is completed. The precursor is then proteolytically cleaved in the trans-Golgi and thereby activated by cellular furin or furin-like proteases to produce gp120 and gp41. Its function is as follows. Attaches the virus to the host lymphoid cell by binding to the primary receptor CD4. This interaction induces a structural rearrangement creating a high affinity binding site for a chemokine coreceptor like CXCR4 and/or CCR5. Acts as a ligand for CD209/DC-SIGN and CLEC4M/DC-SIGNR, which are respectively found on dendritic cells (DCs), and on endothelial cells of liver sinusoids and lymph node sinuses. These interactions allow capture of viral particles at mucosal surfaces by these cells and subsequent transmission to permissive cells. HIV subverts the migration properties of dendritic cells to gain access to CD4+ T-cells in lymph nodes. Virus transmission to permissive T-cells occurs either in trans (without DCs infection, through viral capture and transmission), or in cis (following DCs productive infection, through the usual CD4-gp120 interaction), thereby inducing a robust infection. In trans infection, bound virions remain infectious over days and it is proposed that they are not degraded, but protected in non-lysosomal acidic organelles within the DCs close to the cell membrane thus contributing to the viral infectious potential during DCs' migration from the periphery to the lymphoid tissues. On arrival at lymphoid tissues, intact virions recycle back to DCs' cell surface allowing virus transmission to CD4+ T-cells. Functionally, acts as a class I viral fusion protein. Under the current model, the protein has at least 3 conformational states: pre-fusion native state, pre-hairpin intermediate state, and post-fusion hairpin state. During fusion of viral and target intracellular membranes, the coiled coil regions (heptad repeats) assume a trimer-of-hairpins structure, positioning the fusion peptide in close proximity to the C-terminal region of the ectodomain. The formation of this structure appears to drive apposition and subsequent fusion of viral and target cell membranes. Complete fusion occurs in host cell endosomes and is dynamin-dependent, however some lipid transfer might occur at the plasma membrane. The virus undergoes clathrin-dependent internalization long before endosomal fusion, thus minimizing the surface exposure of conserved viral epitopes during fusion and reducing the efficacy of inhibitors targeting these epitopes. Membranes fusion leads to delivery of the nucleocapsid into the cytoplasm. The chain is Envelope glycoprotein gp160 from Homo sapiens (Human).